The following is a 173-amino-acid chain: Crossover junction endodeoxyribonuclease RuvC (173 aa).

Catalysis depends on residues D8, E67, and D139. Mg(2+)-binding residues include D8, E67, and D139.

It belongs to the RuvC family. In terms of assembly, homodimer which binds Holliday junction (HJ) DNA. The HJ becomes 2-fold symmetrical on binding to RuvC with unstacked arms; it has a different conformation from HJ DNA in complex with RuvA. In the full resolvosome a probable DNA-RuvA(4)-RuvB(12)-RuvC(2) complex forms which resolves the HJ. The cofactor is Mg(2+).

It localises to the cytoplasm. The catalysed reaction is Endonucleolytic cleavage at a junction such as a reciprocal single-stranded crossover between two homologous DNA duplexes (Holliday junction).. Functionally, the RuvA-RuvB-RuvC complex processes Holliday junction (HJ) DNA during genetic recombination and DNA repair. Endonuclease that resolves HJ intermediates. Cleaves cruciform DNA by making single-stranded nicks across the HJ at symmetrical positions within the homologous arms, yielding a 5'-phosphate and a 3'-hydroxyl group; requires a central core of homology in the junction. The consensus cleavage sequence is 5'-(A/T)TT(C/G)-3'. Cleavage occurs on the 3'-side of the TT dinucleotide at the point of strand exchange. HJ branch migration catalyzed by RuvA-RuvB allows RuvC to scan DNA until it finds its consensus sequence, where it cleaves and resolves the cruciform DNA. The protein is Crossover junction endodeoxyribonuclease RuvC of Pectobacterium carotovorum subsp. carotovorum (strain PC1).